Reading from the N-terminus, the 67-residue chain is Probable Sec-independent protein translocase protein TatE (67 aa).

A helical transmembrane segment spans residues 4–21 (ISITKLLVVAALVVLLFG). The disordered stretch occupies residues 46 to 67 (EDAGAKKEAGGDIQAEKLSHKE).

This sequence belongs to the TatA/E family. TatE subfamily.

The protein localises to the cell inner membrane. Functionally, part of the twin-arginine translocation (Tat) system that transports large folded proteins containing a characteristic twin-arginine motif in their signal peptide across membranes. TatE shares overlapping functions with TatA. This is Probable Sec-independent protein translocase protein TatE from Citrobacter koseri (strain ATCC BAA-895 / CDC 4225-83 / SGSC4696).